The sequence spans 447 residues: Glutamate--tRNA ligase 1 (447 aa).

Residues 10-20 (PSPTGMLHVGN) carry the 'HIGH' region motif. The 'KMSKS' region motif lies at 240–244 (KISKR). K243 provides a ligand contact to ATP.

The protein belongs to the class-I aminoacyl-tRNA synthetase family. Glutamate--tRNA ligase type 1 subfamily. In terms of assembly, monomer.

The protein localises to the cytoplasm. The catalysed reaction is tRNA(Glu) + L-glutamate + ATP = L-glutamyl-tRNA(Glu) + AMP + diphosphate. Its function is as follows. Catalyzes the attachment of glutamate to tRNA(Glu) in a two-step reaction: glutamate is first activated by ATP to form Glu-AMP and then transferred to the acceptor end of tRNA(Glu). The sequence is that of Glutamate--tRNA ligase 1 from Rickettsia prowazekii (strain Madrid E).